A 130-amino-acid polypeptide reads, in one-letter code: Small ribosomal subunit protein uS9 (130 aa).

The protein belongs to the universal ribosomal protein uS9 family.

The polypeptide is Small ribosomal subunit protein uS9 (Pseudomonas putida (strain W619)).